Reading from the N-terminus, the 724-residue chain is Probable serine/threonine-protein kinase KKQ8 (724 aa).

Disordered stretches follow at residues Met-1–Ser-81 and His-93–Leu-188. Ser-19 carries the post-translational modification Phosphoserine. The span at Pro-45 to Lys-54 shows a compositional bias: low complexity. A compositionally biased stretch (polar residues) spans Phe-95–Pro-106. Positions Arg-143 to Ser-162 are enriched in low complexity. 3 positions are modified to phosphoserine: Ser-232, Ser-238, and Ser-241. The tract at residues Ser-329–Asp-355 is disordered. The span at Gly-338–Gln-351 shows a compositional bias: polar residues. Residues Gly-412 to Met-712 form the Protein kinase domain. ATP-binding positions include Val-418 to Val-426 and Lys-455. Asp-563 functions as the Proton acceptor in the catalytic mechanism.

The protein belongs to the protein kinase superfamily. CAMK Ser/Thr protein kinase family. NPR/HAL subfamily. HAL5 sub-subfamily.

It localises to the cytoplasm. The catalysed reaction is L-seryl-[protein] + ATP = O-phospho-L-seryl-[protein] + ADP + H(+). It catalyses the reaction L-threonyl-[protein] + ATP = O-phospho-L-threonyl-[protein] + ADP + H(+). The chain is Probable serine/threonine-protein kinase KKQ8 (KKQ8) from Saccharomyces cerevisiae (strain ATCC 204508 / S288c) (Baker's yeast).